We begin with the raw amino-acid sequence, 380 residues long: XK-related protein 9 (380 aa).

A run of 8 helical transmembrane segments spans residues 10–30 (LLSA…AALV), 39–59 (VVCA…TQVF), 81–101 (LPVV…GIFI), 167–187 (CSLV…WALV), 228–248 (ALLL…WLLG), 264–284 (SLEF…FFNV), 294–314 (ITYY…LFVL), and 329–349 (TLMA…YLLL).

Belongs to the XK family.

The protein resides in the cell membrane. It catalyses the reaction a 1,2-diacyl-sn-glycero-3-phospho-L-serine(in) = a 1,2-diacyl-sn-glycero-3-phospho-L-serine(out). Phospholipid scramblase that promotes phosphatidylserine exposure on apoptotic cell surface. Phosphatidylserine is a specific marker only present at the surface of apoptotic cells and acts as a specific signal for engulfment. In Tetraodon nigroviridis (Spotted green pufferfish), this protein is XK-related protein 9.